Consider the following 186-residue polypeptide: Inner membrane-spanning protein YciB (186 aa).

A run of 5 helical transmembrane segments spans residues 10-30 (IILFFAAFKVWGIYVATAVAI), 47-67 (VEPLQWLSLGVIVLFGGATLL), 76-96 (WKPTVLYWLMGGTLLVGQLVF), 121-141 (WGWTGFFATMGVLNLWVAYNF), and 149-169 (FKLFGGIGLMFAFVIAQALYL).

Belongs to the YciB family.

The protein resides in the cell inner membrane. In terms of biological role, plays a role in cell envelope biogenesis, maintenance of cell envelope integrity and membrane homeostasis. This is Inner membrane-spanning protein YciB from Acidovorax sp. (strain JS42).